The sequence spans 764 residues: Polyadenylate-binding protein, cytoplasmic and nuclear (764 aa).

Positions 36–56 (VPEAQAEGAEAAPTPTAAPHP) are disordered. 4 RRM domains span residues 60–138 (ASLY…WSQR), 148–225 (GNIF…HHIP), 241–318 (TNVY…RAQK), and 344–462 (VNLY…LAQR). 2 disordered regions span residues 375-420 (VMRD…GDRK) and 587-634 (GRGG…PRGN). Basic and acidic residues-rich tracts occupy residues 387 to 399 (KDEK…KEGE) and 408 to 420 (GSEK…GDRK). A compositionally biased stretch (gly residues) spans 587 to 596 (GRGGPAGRGP). The span at 597–613 (QGIPAGIPQGLQGGPAV) shows a compositional bias: low complexity. A PABC domain is found at 657 to 734 (GSFLQAQLAT…ALAVYDEYLK (78 aa)). Positions 735–745 (TQGQQPTQQPA) are enriched in polar residues. The tract at residues 735–764 (TQGQQPTQQPAEANGEQPKAEEQKPEEQKA) is disordered. Basic and acidic residues predominate over residues 752-764 (PKAEEQKPEEQKA).

The protein belongs to the polyadenylate-binding protein type-1 family.

It is found in the cytoplasm. It localises to the nucleus. Binds the poly(A) tail of mRNA. Appears to be an important mediator of the multiple roles of the poly(A) tail in mRNA biogenesis, stability and translation. In the nucleus, involved in both mRNA cleavage and polyadenylation. Is also required for efficient mRNA export to the cytoplasm. Acts in concert with a poly(A)-specific nuclease (PAN) to affect poly(A) tail shortening, which may occur concomitantly with either nucleocytoplasmic mRNA transport or translational initiation. In the cytoplasm, stimulates translation initiation and regulates mRNA decay through translation termination-coupled poly(A) shortening, probably mediated by PAN. The sequence is that of Polyadenylate-binding protein, cytoplasmic and nuclear (pabp-1) from Neurospora crassa (strain ATCC 24698 / 74-OR23-1A / CBS 708.71 / DSM 1257 / FGSC 987).